The primary structure comprises 628 residues: tRNA(Thr) (cytosine(32)-N(3))-methyltransferase (628 aa).

The span at 1–18 shows a compositional bias: basic and acidic residues; sequence MGVADLIKKFESISKEEG. 3 disordered regions span residues 1–106, 124–269, and 302–331; these read MGVA…GENA, AEVL…VNDL, and NIAH…TEGS. The segment covering 22–31 has biased composition (polar residues); sequence VDTNSSSKPL. A compositionally biased stretch (basic and acidic residues) spans 32 to 42; that stretch reads KSNDETKELHQ. Residues 53–62 are compositionally biased toward acidic residues; it reads DVNEEFENEP. The residue at position 93 (S93) is a Phosphoserine. Over residues 132-146 the composition is skewed to acidic residues; that stretch reads EESDAIQEGVAEETE. T150 bears the Phosphothreonine mark. The segment covering 173–186 has biased composition (acidic residues); sequence PAEEYSQSEEDADI. The segment covering 196–207 has biased composition (polar residues); sequence NAENASQQANDG. The segment covering 215–230 has biased composition (basic residues); that stretch reads KNKKKKNKKKNKKKRN. A compositionally biased stretch (polar residues) spans 231-240; that stretch reads GNVNTNANVD. Phosphoserine occurs at positions 321 and 326. T347 is modified (phosphothreonine). S-adenosyl-L-methionine contacts are provided by W399, Y403, G441, D466, D492, L493, and I515.

Belongs to the methyltransferase superfamily. METL family. In terms of assembly, interacts with SES1.

It is found in the cytoplasm. The protein resides in the cytoskeleton. It catalyses the reaction cytidine(32) in tRNA(Thr) + S-adenosyl-L-methionine = N(3)-methylcytidine(32) in tRNA(Thr) + S-adenosyl-L-homocysteine + H(+). The catalysed reaction is cytidine(32) in tRNA(Ser) + S-adenosyl-L-methionine = N(3)-methylcytidine(32) in tRNA(Ser) + S-adenosyl-L-homocysteine + H(+). S-adenosyl-L-methionine-dependent methyltransferase that mediates N(3)-methylcytidine modification of residue 32 of the tRNA anticodon loop of tRNA(Thr) and tRNA(Ser). N(3)-methylcytidine methylation of tRNA(Thr) requires the N6-threonylcarbamoylation of tRNA (t6A37) by the EKC/KEOPS complex as prerequisite. N(3)-methylcytidine methylation of tRNA(Ser) requires the formation of N(6)-dimethylallyladenosine(37) (i6A37) by MOD5 as prerequisite. Methylation of tRNA(Ser) is also stimulated by SES1. Binds F-actin and shows weak F-actin cross-linking activity. In Saccharomyces cerevisiae (strain ATCC 204508 / S288c) (Baker's yeast), this protein is tRNA(Thr) (cytosine(32)-N(3))-methyltransferase (ABP140).